The following is a 208-amino-acid chain: Holliday junction resolvase RecU (208 aa).

A disordered region spans residues 1-28 (MNYPNGKPYSKNKPLDGRKSSPFSSNIE). T87, D89, E102, and Q121 together coordinate Mg(2+).

Belongs to the RecU family. Requires Mg(2+) as cofactor.

Its subcellular location is the cytoplasm. It carries out the reaction Endonucleolytic cleavage at a junction such as a reciprocal single-stranded crossover between two homologous DNA duplexes (Holliday junction).. Its function is as follows. Endonuclease that resolves Holliday junction intermediates in genetic recombination. Cleaves mobile four-strand junctions by introducing symmetrical nicks in paired strands. Promotes annealing of linear ssDNA with homologous dsDNA. Required for DNA repair, homologous recombination and chromosome segregation. The protein is Holliday junction resolvase RecU of Staphylococcus epidermidis (strain ATCC 12228 / FDA PCI 1200).